We begin with the raw amino-acid sequence, 562 residues long: uncharacterized protein (562 aa).

Transmembrane regions (helical) follow at residues valine 4–leucine 26, glycine 33–phenylalanine 55, alanine 59–glycine 78, leucine 90–phenylalanine 112, and isoleucine 159–alanine 181. RCK C-terminal domains lie at proline 207–threonine 287 and leucine 295–glutamine 375. Transmembrane regions (helical) follow at residues isoleucine 385 to serine 402, glycine 406 to leucine 428, leucine 449 to glutamine 471, leucine 476 to histidine 498, valine 505 to alanine 524, and valine 539 to valine 561.

It belongs to the AAE transporter (TC 2.A.81) family.

Its subcellular location is the cell membrane. This is an uncharacterized protein from Bradyrhizobium diazoefficiens (strain JCM 10833 / BCRC 13528 / IAM 13628 / NBRC 14792 / USDA 110).